Here is a 334-residue protein sequence, read N- to C-terminus: MPIRHCIVHLIDKKPDGTPAVLHARDSELAESAAIENMLADLNESYNAKQGKAWGLFHPESGAFPFSGWLKEYMEGGKDFTAFSKVAVEHLQKLMEESNLSVGGHVLFAHYQQGMTDYLAIALLHHSEGVAVTDQLDVTPSRHLDLGQLHLAARINVSEWQNNKQSKQYISFIKGKNGKKVSEYFRDFIGCQEGVDGPGETRTLLKAFSDFVESEDLPEDSAREKTKTLVDYASSQAKLGEPMGLEELSELIDEERPKAFYDHIRNKDYGLSPEIPADKRTLNQFRRFTGRAEGLSISFEAHLLGSKIEYDEEAGTLVIKGLPTSLTDQLKRRN.

The protein belongs to the YejK family.

It is found in the cytoplasm. The protein localises to the nucleoid. This chain is Nucleoid-associated protein Pfl01_0983, found in Pseudomonas fluorescens (strain Pf0-1).